A 164-amino-acid polypeptide reads, in one-letter code: 6,7-dimethyl-8-ribityllumazine synthase (164 aa).

5-amino-6-(D-ribitylamino)uracil is bound by residues phenylalanine 24, 58–60, and 82–84; these read ALE and AVI. 87–88 lines the (2S)-2-hydroxy-3-oxobutyl phosphate pocket; that stretch reads ET. Histidine 90 (proton donor) is an active-site residue. Residue asparagine 115 participates in 5-amino-6-(D-ribitylamino)uracil binding. Position 129 (arginine 129) interacts with (2S)-2-hydroxy-3-oxobutyl phosphate.

The protein belongs to the DMRL synthase family.

The catalysed reaction is (2S)-2-hydroxy-3-oxobutyl phosphate + 5-amino-6-(D-ribitylamino)uracil = 6,7-dimethyl-8-(1-D-ribityl)lumazine + phosphate + 2 H2O + H(+). Its pathway is cofactor biosynthesis; riboflavin biosynthesis; riboflavin from 2-hydroxy-3-oxobutyl phosphate and 5-amino-6-(D-ribitylamino)uracil: step 1/2. Catalyzes the formation of 6,7-dimethyl-8-ribityllumazine by condensation of 5-amino-6-(D-ribitylamino)uracil with 3,4-dihydroxy-2-butanone 4-phosphate. This is the penultimate step in the biosynthesis of riboflavin. This is 6,7-dimethyl-8-ribityllumazine synthase from Ralstonia nicotianae (strain ATCC BAA-1114 / GMI1000) (Ralstonia solanacearum).